Reading from the N-terminus, the 446-residue chain is NADH-dependent phenylglyoxylate dehydrogenase subunit beta (446 aa).

4Fe-4S ferredoxin-type domains are found at residues 6–35 (STIAFDPAKCDGCGDCMTACAQAKTGTDDI), 49–80 (ADKTFELALCRQCADPKCVTVCPAGALNKDGT), 82–111 (GVIGWDATKCVDCLLCTVGCAYAGIALDEA), and 109–141 (DEATGHVAKCDTCDGNPACVPACPHGALKHITT).

In terms of assembly, dimer of heteropentamers composed of an alpha (PadG), a beta (PadI), a gamma (PadE), a delta (PadF) and an epsilon (PadH) subunit. The cofactor is [4Fe-4S] cluster.

The catalysed reaction is phenylglyoxylate + NAD(+) + CoA = benzoyl-CoA + CO2 + NADH. Activated by magnesium ions and thiamine diphosphate. Involved in the anaerobic metabolism of phenylalanine and phenylacetate. Catalyzes the oxidative decarboxylation of phenylglyoxylate to benzoyl-CoA and CO(2). It can also react slowly with 2-oxo-3-methylbutanoate and use different electron acceptors such as benzyl viologen, methyl viologen, FAD or FMN, but NAD seems to be the physiological electron acceptor. Also catalyzes an isotope exchange between CO(2) and the carboxyl group which proves partial or complete reversibility of the oxidative decarboxylation reaction. This Aromatoleum evansii (Azoarcus evansii) protein is NADH-dependent phenylglyoxylate dehydrogenase subunit beta (padI).